Here is a 174-residue protein sequence, read N- to C-terminus: Ribosome maturation factor RimM (174 aa).

The PRC barrel domain maps to 96–169; it reads KDTFFICDLI…KMVVDLPQGL (74 aa).

The protein belongs to the RimM family. In terms of assembly, binds ribosomal protein uS19.

It is found in the cytoplasm. An accessory protein needed during the final step in the assembly of 30S ribosomal subunit, possibly for assembly of the head region. Essential for efficient processing of 16S rRNA. May be needed both before and after RbfA during the maturation of 16S rRNA. It has affinity for free ribosomal 30S subunits but not for 70S ribosomes. The chain is Ribosome maturation factor RimM from Acetivibrio thermocellus (strain ATCC 27405 / DSM 1237 / JCM 9322 / NBRC 103400 / NCIMB 10682 / NRRL B-4536 / VPI 7372) (Clostridium thermocellum).